The primary structure comprises 235 residues: Sugar fermentation stimulation protein homolog (235 aa).

The protein belongs to the SfsA family.

In Allorhizobium ampelinum (strain ATCC BAA-846 / DSM 112012 / S4) (Agrobacterium vitis (strain S4)), this protein is Sugar fermentation stimulation protein homolog.